The primary structure comprises 1214 residues: MRIDEGFLTPEAIARLQQEEALSDKRHKRTAQQIEAIYSSGQNILVSASAGSGKTFVMVERILDKILRGISVDRLFISTFTVKAATELIERIEKKLHTAIAETQDYQLKAYLNDQLQALSQADIGTMDAFAQKLVHQHGYVLGISPHFRIIQDKAEQDILKREVFRQVFEDYMSQTDNKAFIQLVQNFSGRRKDSSAFREIVDSIYAFSQSTANPSSWLAEVFLRGAKTYTSFADIPDQVVDALLACMQDTADQLRDLTDMEGYAQTTKAGKLTAKYTKHLKMIDNLYEWASHFDSLYGKERLGQLAQELTALLPSGADITVAGHKYPIFKSLQEQLVGFRHLETILAYQQESLPLLEVLQAFVISFSEAYLAAKMQENAFEFSDIAHFAIEILQQAPDIRQAYQGHYHEVMVDEYQDNNHMQERLLELLSNGHNRFMVGDIKQSIYRFRQADPQIFNQKFKDYQSNPEHGKLILLKENFRSQSEVLNVTNAVFSRLMDESLGEITYDDKHQLVAGSEAQKQLHPENRAQLLLYNTDQAQEGTEEASTNDGISAGEVTLVAKEIIRLYNEEKVAFEDITLLVSSRTRNDTIFQVFNQYGIPLVADGGQENYLKSVEVMVMLDTLRSINNPLNDYALVALMRSPMFSFDEDQLARISLQSSSQDQPQAFYDKLSNSLRGQGEHPGLIGQELMTKLVDFDRTLRDWRQFAKLHSLYELIWKIFNDRFYFDFVASQPKAEQAQANLYALAIRADQFEQSGYKGLSRFIGMIDKVLETQNDLADVEVERPKHAVNLMTIHKSKGLEFHYVFILNFDKRFAMADLQAPIILNRDEGIGIKYVANVKELLRDEKLASLKVTMETLPYQLNKQQLRLATLSEQMRLLYVAMTRAEKKVYLVGKASKEKIQAKTADNSSEGRLALASRERLLSFQDWLLAITATFSKEDLFIDVRFVDDSDLTAEAVGQLRSSGLLQADDLKDNRQTEDIARALDMLDKVSKLNASYQAAIELPTVRTPSQLKTLYEPLMDTDGVDIIDQPYHRPKSFELPDFSKKKAVEPSQVGSSLHELMQRIPMSDQITAGDIEQALQLVSADAEVKARLDIKKVTAFFATTELGKLLQEHHQRLYREAPFAILKKDSLSQEQYVVRGIIDGYLLFEDRIVLFDYKTDRYQQSAELKQRYQQQMDLYAEALSQSYGIARVEKYLVLMGGSQLEVVRLDE.

One can recognise a UvrD-like helicase ATP-binding domain in the interval 27 to 483; that stretch reads HKRTAQQIEA…ILLKENFRSQ (457 aa). Residue 48 to 55 participates in ATP binding; sequence ASAGSGKT. The UvrD-like helicase C-terminal domain maps to 512–800; it reads QLVAGSEAQK…NLMTIHKSKG (289 aa).

This sequence belongs to the helicase family. AddA subfamily. As to quaternary structure, heterodimer of AddA and AddB/RexB. Mg(2+) is required as a cofactor.

The catalysed reaction is Couples ATP hydrolysis with the unwinding of duplex DNA by translocating in the 3'-5' direction.. It carries out the reaction ATP + H2O = ADP + phosphate + H(+). The heterodimer acts as both an ATP-dependent DNA helicase and an ATP-dependent, dual-direction single-stranded exonuclease. Recognizes the chi site generating a DNA molecule suitable for the initiation of homologous recombination. The AddA nuclease domain is required for chi fragment generation; this subunit has the helicase and 3' -&gt; 5' nuclease activities. The sequence is that of ATP-dependent helicase/nuclease subunit A from Streptococcus equi subsp. zooepidemicus (strain MGCS10565).